The following is a 278-amino-acid chain: Ribosomal RNA small subunit methyltransferase A (278 aa).

S-adenosyl-L-methionine contacts are provided by Asn27, Leu29, Gly54, Glu75, Asp101, and Asn122.

It belongs to the class I-like SAM-binding methyltransferase superfamily. rRNA adenine N(6)-methyltransferase family. RsmA subfamily.

It is found in the cytoplasm. It carries out the reaction adenosine(1518)/adenosine(1519) in 16S rRNA + 4 S-adenosyl-L-methionine = N(6)-dimethyladenosine(1518)/N(6)-dimethyladenosine(1519) in 16S rRNA + 4 S-adenosyl-L-homocysteine + 4 H(+). Specifically dimethylates two adjacent adenosines (A1518 and A1519) in the loop of a conserved hairpin near the 3'-end of 16S rRNA in the 30S particle. May play a critical role in biogenesis of 30S subunits. The polypeptide is Ribosomal RNA small subunit methyltransferase A (Brucella anthropi (strain ATCC 49188 / DSM 6882 / CCUG 24695 / JCM 21032 / LMG 3331 / NBRC 15819 / NCTC 12168 / Alc 37) (Ochrobactrum anthropi)).